Reading from the N-terminus, the 313-residue chain is Olfactory receptor 8C8 (313 aa).

At 1–27 (MMQITMENKSSVSEFILMGLTDQPELQ) the chain is on the extracellular side. N8 is a glycosylation site (N-linked (GlcNAc...) asparagine). A helical transmembrane segment spans residues 28-48 (LPLFVLFLMNYTATVMGNLTL). Residues 49 to 59 (MNLICLNSNLH) are Cytoplasmic-facing. The helical transmembrane segment at 60–80 (TPMYFFLFNLSFIDFCYSMVF) threads the bilayer. Residues 81–96 (TPKMLMSFILEKNTIS) lie on the Extracellular side of the membrane. The helical transmembrane segment at 97–117 (FGGCMAQLFFFLFFVNSESYV) threads the bilayer. The cysteines at positions 100 and 192 are disulfide-linked. The Cytoplasmic segment spans residues 118–136 (LTAMAYDRYVAICKPLTYK). The helical transmembrane segment at 137–157 (VIMSPKICCLLIFSSYLMGFA) threads the bilayer. The Extracellular segment spans residues 158–208 (SAMAHTGCMIRLSFCDSNIINHYMCDIFPLLPLSCSSTYVNELMSSVVVGS). Residues 209–229 (AIILCCLIILISYAMILFNII) traverse the membrane as a helical segment. At 230–239 (HMSSGKGWSK) the chain is on the cytoplasmic side. Residues 240 to 260 (ALGTCGSHIITVSLFYGSGLL) form a helical membrane-spanning segment. At 261–274 (AYVKPSSAKTVGQG) the chain is on the extracellular side. Residues 275–295 (KFFSVFYTLLVPMLNPLIYSL) traverse the membrane as a helical segment. At 296 to 313 (RNKDVKLAVKKTWKRITS) the chain is on the cytoplasmic side.

Belongs to the G-protein coupled receptor 1 family. As to expression, expressed in neurons in the olfactory epithelium.

It is found in the cell membrane. In terms of biological role, potential odorant receptor. The protein is Olfactory receptor 8C8 of Mus musculus (Mouse).